A 113-amino-acid polypeptide reads, in one-letter code: Hydrogenase maturation factor HypA (113 aa).

His-2 contributes to the Ni(2+) binding site. Residues Cys-73, Cys-76, Cys-89, and Cys-92 each contribute to the Zn(2+) site.

It belongs to the HypA/HybF family.

Its function is as follows. Involved in the maturation of [NiFe] hydrogenases. Required for nickel insertion into the metal center of the hydrogenase. This is Hydrogenase maturation factor HypA from Moorella thermoacetica (strain ATCC 39073 / JCM 9320).